A 376-amino-acid polypeptide reads, in one-letter code: UDP-N-acetylglucosamine--N-acetylmuramyl-(pentapeptide) pyrophosphoryl-undecaprenol N-acetylglucosamine transferase (376 aa).

Residues 11–13 (TGG), Asn117, Arg160, Ser208, and Gln310 each bind UDP-N-acetyl-alpha-D-glucosamine.

This sequence belongs to the glycosyltransferase 28 family. MurG subfamily.

It localises to the cell inner membrane. It catalyses the reaction di-trans,octa-cis-undecaprenyl diphospho-N-acetyl-alpha-D-muramoyl-L-alanyl-D-glutamyl-meso-2,6-diaminopimeloyl-D-alanyl-D-alanine + UDP-N-acetyl-alpha-D-glucosamine = di-trans,octa-cis-undecaprenyl diphospho-[N-acetyl-alpha-D-glucosaminyl-(1-&gt;4)]-N-acetyl-alpha-D-muramoyl-L-alanyl-D-glutamyl-meso-2,6-diaminopimeloyl-D-alanyl-D-alanine + UDP + H(+). The protein operates within cell wall biogenesis; peptidoglycan biosynthesis. Cell wall formation. Catalyzes the transfer of a GlcNAc subunit on undecaprenyl-pyrophosphoryl-MurNAc-pentapeptide (lipid intermediate I) to form undecaprenyl-pyrophosphoryl-MurNAc-(pentapeptide)GlcNAc (lipid intermediate II). The chain is UDP-N-acetylglucosamine--N-acetylmuramyl-(pentapeptide) pyrophosphoryl-undecaprenol N-acetylglucosamine transferase from Rickettsia massiliae (strain Mtu5).